The primary structure comprises 197 residues: Protein-S-isoprenylcysteine O-methyltransferase B (197 aa).

3 consecutive transmembrane segments (helical) span residues 16 to 36 (MFLAIIFFHTSEYILAIAIHG), 52 to 72 (ALAMLISVLEYIAEIVFFPGL), and 81 to 101 (FGLTMIILGEILRKTAIITAG). Residues 116-119 (HKLV), Y124, and 129-132 (HPSY) contribute to the S-adenosyl-L-methionine site. The chain crosses the membrane as a helical span at residues 140–160 (VGTQVMLCNPISAIAFAVVVW). R166 contributes to the substrate binding site. An S-adenosyl-L-methionine-binding site is contributed by E170.

This sequence belongs to the class VI-like SAM-binding methyltransferase superfamily. Isoprenylcysteine carboxyl methyltransferase family. Zn(2+) serves as cofactor. In terms of tissue distribution, expressed in flowers, stems, leaves, roots and siliques. Detected in apices and vascular tissues of leaves and roots, in the stigma and in the filaments and anthers of stamen. Not found in petioles or hypocotyls.

It is found in the endoplasmic reticulum membrane. It catalyses the reaction [protein]-C-terminal S-[(2E,6E)-farnesyl]-L-cysteine + S-adenosyl-L-methionine = [protein]-C-terminal S-[(2E,6E)-farnesyl]-L-cysteine methyl ester + S-adenosyl-L-homocysteine. Inhibited by farnesylthioacetic acid (FTAA) and N-acetyl-S-trans, trans-farnesyl-l-cysteine (AFC). Catalyzes the post-translational methylation of isoprenylated C-terminal cysteine residues, resulting in the modulation of the function of prenylated proteins. Involved in negative regulation of abscisic acid signaling. Carboxyl methylation is a reversible and potentially regulated step in the post-translational modification of prenylated proteins. This Arabidopsis thaliana (Mouse-ear cress) protein is Protein-S-isoprenylcysteine O-methyltransferase B.